The primary structure comprises 658 residues: Threonine--tRNA ligase (658 aa).

Residues 1–61 (MSDVRVIIQR…RDGESVEPVE (61 aa)) enclose the TGS domain. The catalytic stretch occupies residues 259-554 (DHRKLGNELD…LLEHYAGAFP (296 aa)). Zn(2+) is bound by residues C353, H404, and H531.

Belongs to the class-II aminoacyl-tRNA synthetase family. Homodimer. Zn(2+) serves as cofactor.

The protein resides in the cytoplasm. The enzyme catalyses tRNA(Thr) + L-threonine + ATP = L-threonyl-tRNA(Thr) + AMP + diphosphate + H(+). Functionally, catalyzes the attachment of threonine to tRNA(Thr) in a two-step reaction: L-threonine is first activated by ATP to form Thr-AMP and then transferred to the acceptor end of tRNA(Thr). Also edits incorrectly charged L-seryl-tRNA(Thr). This is Threonine--tRNA ligase from Streptomyces griseus subsp. griseus (strain JCM 4626 / CBS 651.72 / NBRC 13350 / KCC S-0626 / ISP 5235).